The sequence spans 319 residues: GATA transcription factor 18 (319 aa).

A compositionally biased stretch (low complexity) spans 1 to 15 (MPDAAAAAAAAQDAD). The interval 1-74 (MPDAAAAAAA…AAPEPVSALL (74 aa)) is disordered. Over residues 32–60 (NNDDDGDDGTEEDEEEDDDEEGDEEELPP) the composition is skewed to acidic residues. The 36-residue stretch at 74-109 (LPGSPNQLTLLFQGEVYVFESVTPEKVQAVLLLLGS) folds into the Tify domain. A CCT domain is found at 143 to 185 (RVASLIRFREKRKERNFDKKIRYAVRKEVALRMQRRKGQFAGR). Residues 215 to 242 (CQNCGTSEKMTPAMRRGPAGPRTLCNAC) form a GATA-type zinc finger. Residues 292 to 319 (ITASHGEVMGDSTPANEAEIGAPKAQSQ) are disordered.

This sequence belongs to the type IV zinc-finger family. Class C subfamily.

It is found in the nucleus. In terms of biological role, transcriptional activator that specifically binds 5'-GATA-3' or 5'-GAT-3' motifs within gene promoters. This chain is GATA transcription factor 18, found in Oryza sativa subsp. indica (Rice).